An 801-amino-acid chain; its full sequence is Mitochondrial intermediate peptidase (801 aa).

The transit peptide at 1 to 41 directs the protein to the mitochondrion; sequence MKDQLLVPLRRRPWTCQKCLQRLQLPRHQTRRSFETAASPF. Histidine 564 is a Zn(2+) binding site. Glutamate 565 is a catalytic residue. Zn(2+) is bound by residues histidine 568 and histidine 571.

It belongs to the peptidase M3 family. Zn(2+) serves as cofactor.

It localises to the mitochondrion matrix. It catalyses the reaction Release of an N-terminal octapeptide as second stage of processing of some proteins imported into the mitochondrion.. Functionally, cleaves proteins, imported into the mitochondrion, to their mature size. While most mitochondrial precursor proteins are processed to the mature form in one step by mitochondrial processing peptidase (MPP), the sequential cleavage by MIP of an octapeptide after initial processing by MPP is a required step for a subgroup of nuclear-encoded precursor proteins destined for the matrix or the inner membrane. This chain is Mitochondrial intermediate peptidase (oct1), found in Aspergillus fumigatus (strain ATCC MYA-4609 / CBS 101355 / FGSC A1100 / Af293) (Neosartorya fumigata).